A 251-amino-acid polypeptide reads, in one-letter code: Imidazole glycerol phosphate synthase subunit HisF (251 aa).

Active-site residues include aspartate 10 and aspartate 129.

This sequence belongs to the HisA/HisF family. In terms of assembly, heterodimer of HisH and HisF.

The protein resides in the cytoplasm. It catalyses the reaction 5-[(5-phospho-1-deoxy-D-ribulos-1-ylimino)methylamino]-1-(5-phospho-beta-D-ribosyl)imidazole-4-carboxamide + L-glutamine = D-erythro-1-(imidazol-4-yl)glycerol 3-phosphate + 5-amino-1-(5-phospho-beta-D-ribosyl)imidazole-4-carboxamide + L-glutamate + H(+). It functions in the pathway amino-acid biosynthesis; L-histidine biosynthesis; L-histidine from 5-phospho-alpha-D-ribose 1-diphosphate: step 5/9. Its function is as follows. IGPS catalyzes the conversion of PRFAR and glutamine to IGP, AICAR and glutamate. The HisF subunit catalyzes the cyclization activity that produces IGP and AICAR from PRFAR using the ammonia provided by the HisH subunit. The protein is Imidazole glycerol phosphate synthase subunit HisF of Cutibacterium acnes (strain DSM 16379 / KPA171202) (Propionibacterium acnes).